The following is a 942-amino-acid chain: Alpha,alpha-trehalose-phosphate synthase [UDP-forming] 1 (942 aa).

The interval 28–57 is disordered; it reads REKRKSNRARNPNDVAGSSENSENDLRLEG. A glycosyltransferase region spans residues 92-559; sequence QRLLVVANRL…AETFVSELND (468 aa). Residues 815–892 are disordered; it reads DMPAIARSRP…LGNSRRPSPE (78 aa). Low complexity-rich tracts occupy residues 821 to 833 and 841 to 867; these read RSRP…AKSS and SKST…NKSS. Over residues 879-888 the composition is skewed to polar residues; sequence SNHSLGNSRR.

This sequence in the N-terminal section; belongs to the glycosyltransferase 20 family. In the C-terminal section; belongs to the trehalose phosphatase family. In terms of tissue distribution, expressed in seedlings, leaves, roots, stems, flowers and siliques.

Its subcellular location is the vacuole. The protein resides in the secreted. It localises to the cell wall. The protein localises to the cytoplasm. The catalysed reaction is D-glucose 6-phosphate + UDP-alpha-D-glucose = alpha,alpha-trehalose 6-phosphate + UDP + H(+). Functionally, required for normal embryo development, vegetative growth and transition to flowering. Regulates embryo growth, cell wall deposition, starch and sucrose degradation, but not cell differentiation. Involved in the regulation of glucose sensing and signaling genes during plant development. This is Alpha,alpha-trehalose-phosphate synthase [UDP-forming] 1 from Arabidopsis thaliana (Mouse-ear cress).